A 184-amino-acid chain; its full sequence is Oligoribonuclease (184 aa).

Residues 10 to 172 (LVWVDCEMTG…ADVLESIAEL (163 aa)) enclose the Exonuclease domain. The active site involves Tyr129.

It belongs to the oligoribonuclease family.

It localises to the cytoplasm. 3'-to-5' exoribonuclease specific for small oligoribonucleotides. This is Oligoribonuclease from Tropheryma whipplei (strain Twist) (Whipple's bacillus).